A 1193-amino-acid chain; its full sequence is MVPAPHTQHSPSSTMLNSSSTTAHAAPSTNGDVHAPKDHHLSSPSDTVSAPVNRKKQKRRQKQAARLAERQLANGHVSTDDTTQNGSSHANPERYHSDDGGADGPDHEQPTNGDVYDKDGQDSMDAHVDSQNPQGPNGTESSQKSTGRKSKKKKGKKARNNSHAQGDETSTPMSTPSVSMSHPLPPPLPSHLASHNILKPAKNRSIWNTSTQEERENIKTFWLELGEEERRQLVKVEKDAVLKKMKEQQRHSCSCTVCGRKRTAIEEELEVLYDAYYEELEQYANHNQGSFEKGSPMVPPPRLYQPPLRSPGQHTRTQGQFHPSRGRIHELTEEDDDLEEDYDEEEDDGDEPYSDEELDEEDEETRAARADFFAFGNSLTVKVADDLLKNDGKHFIDMMEQLAERRMQREEDTQYGIAAAHESLHSGHNHGPFDDEDYDDEEDEDYDSQEEEDYEEDEMDAMTEEQRMEEGRRMFQIFAARMFEQRVLTAYREKVAEQRQQKLIEELMEEETRNEQRNAKKAREAQKRKDKKRLQKQAKEEERARREAEKAAEEAAAKAEQEKKLEEQRKKREEQRKKKEAERKAQEEERARKEAEKLRRQREERERQAEAERKQREEKKRREEARRKEKEERELREKKAKEERDRKAQEEQAKKDTAKGGEEAKDQEKRDDQAKRSSQQGPVPIPSNLHHLQGFSPAVAHSPHVPSATPVLPKAPTPARPRQPSQQDSHSSSPHSQAPSTDPSQASLSPRSMPVSQSSGVASGNSQQGHGLHAMLHQPQPSTPLSPLGRSIPPGFSSVNGIPPNPPGLSGMVARPPVGHDLPSYPPHSGPFISPFRGYPAPSGIPAPPGINGARPMPPGRGFPLEPGQGFAFHGQQIPGAFSTPQGGLPHRHSRQPSGSLERSPLENHAQPMPISRPSPIKRPSSTQQDQQKGGDRTTQRDVDDLSAHLGSSALLDDTDVPLSSTLSQSLPGATAPGTFPGPARASFGGPSLFPDPLSASKHANFAVSPAVSGGTWGAQIPFGTSAFPSAQTWGTGHASGWSNNAFGSGGHHRAHTSRPVAIRLLVIQACKQLNTMSPFKGADGYHDVNLVLRQVEQLRPQNEPSISLKEMLDICDTEGNTQNGGGTFSIKKDETREFVKFEPDNNSAASGHRGSIVPGEIGSPVPSSSLPAFGGIGTPSVLRQYSSPPMGF.

7 disordered regions span residues 1–197 (MVPA…SHNI), 288–368 (QGSF…TRAA), 422–468 (ESLH…EQRM), 508–815 (MEEE…MVAR), 857–942 (MPPG…TQRD), 966–988 (TLSQ…RASF), and 1145–1193 (DNNS…PMGF). Residues 10–29 (SPSSTMLNSSSTTAHAAPST) are compositionally biased toward low complexity. The span at 53–63 (NRKKQKRRQKQ) shows a compositional bias: basic residues. Positions 64–73 (AARLAERQLA) are enriched in low complexity. Residues 76–90 (HVSTDDTTQNGSSHA) show a composition bias toward polar residues. Over residues 91–128 (NPERYHSDDGGADGPDHEQPTNGDVYDKDGQDSMDAHV) the composition is skewed to basic and acidic residues. Over residues 129–140 (DSQNPQGPNGTE) the composition is skewed to polar residues. Residues 146–160 (TGRKSKKKKGKKARN) show a composition bias toward basic residues. Low complexity predominate over residues 169 to 182 (TSTPMSTPSVSMSH). Positions 312 to 321 (GQHTRTQGQF) are enriched in polar residues. Acidic residues-rich tracts occupy residues 332 to 364 (TEED…EDEE) and 434 to 463 (DDED…DAMT). Residues 448–659 (SQEEEDYEED…EEQAKKDTAK (212 aa)) adopt a coiled-coil conformation. Basic and acidic residues-rich tracts occupy residues 508 to 527 (MEEE…EAQK) and 537 to 675 (QAKE…DQAK). Residues 722 to 740 (RQPSQQDSHSSSPHSQAPS) are compositionally biased toward low complexity. The segment covering 741-769 (TDPSQASLSPRSMPVSQSSGVASGNSQQG) has biased composition (polar residues). The span at 914 to 926 (PISRPSPIKRPSS) shows a compositional bias: low complexity. Basic and acidic residues predominate over residues 933 to 942 (KGGDRTTQRD). The segment covering 972–986 (PGATAPGTFPGPARA) has biased composition (low complexity). Polar residues predominate over residues 1182-1193 (VLRQYSSPPMGF).

The protein belongs to the NST1 family.

The protein localises to the cytoplasm. In terms of biological role, may act as a negative regulator of salt tolerance. The protein is Stress response protein nst1 (nst1) of Neosartorya fischeri (strain ATCC 1020 / DSM 3700 / CBS 544.65 / FGSC A1164 / JCM 1740 / NRRL 181 / WB 181) (Aspergillus fischerianus).